A 291-amino-acid chain; its full sequence is Light-independent protochlorophyllide reductase iron-sulfur ATP-binding protein (291 aa).

ATP is bound by residues 10–15 (GIGKST) and Lys39. Position 14 (Ser14) interacts with Mg(2+). Positions 95 and 129 each coordinate [4Fe-4S] cluster. 180–181 (NR) serves as a coordination point for ATP.

This sequence belongs to the NifH/BchL/ChlL family. Homodimer. Protochlorophyllide reductase is composed of three subunits; ChlL, ChlN and ChlB. [4Fe-4S] cluster is required as a cofactor.

It localises to the plastid. The protein localises to the chloroplast. It catalyses the reaction chlorophyllide a + oxidized 2[4Fe-4S]-[ferredoxin] + 2 ADP + 2 phosphate = protochlorophyllide a + reduced 2[4Fe-4S]-[ferredoxin] + 2 ATP + 2 H2O. The protein operates within porphyrin-containing compound metabolism; chlorophyll biosynthesis (light-independent). Functionally, component of the dark-operative protochlorophyllide reductase (DPOR) that uses Mg-ATP and reduced ferredoxin to reduce ring D of protochlorophyllide (Pchlide) to form chlorophyllide a (Chlide). This reaction is light-independent. The L component serves as a unique electron donor to the NB-component of the complex, and binds Mg-ATP. The polypeptide is Light-independent protochlorophyllide reductase iron-sulfur ATP-binding protein (Picea abies (Norway spruce)).